A 541-amino-acid polypeptide reads, in one-letter code: Protein ST7 homolog (541 aa).

Residues 15-35 (FYVALTGTSSLISGLILIFEW) form a helical membrane-spanning segment. The tract at residues 62–116 (DAQSDSSNGSGSSTSSGSSSSSNGGGGGGGGGAGGGGPGAGGGTNSTTTTGTQMP) is disordered. A compositionally biased stretch (low complexity) spans 67–83 (SSNGSGSSTSSGSSSSS). A compositionally biased stretch (gly residues) spans 84–105 (NGGGGGGGGGAGGGGPGAGGGT). The chain crosses the membrane as a helical span at residues 476-496 (LPFFILFTAGLCSFTALLALL).

The protein belongs to the ST7 family.

The protein resides in the membrane. The chain is Protein ST7 homolog from Drosophila pseudoobscura pseudoobscura (Fruit fly).